Here is a 217-residue protein sequence, read N- to C-terminus: Octanoyltransferase (217 aa).

Positions 33–208 (SSSQDEIWLV…KLCSLLGIAS (176 aa)) constitute a BPL/LPL catalytic domain. Substrate contacts are provided by residues 72-79 (RGGQVTYH), 139-141 (SIG), and 152-154 (GLA). The active-site Acyl-thioester intermediate is C170.

The protein belongs to the LipB family.

Its subcellular location is the cytoplasm. The catalysed reaction is octanoyl-[ACP] + L-lysyl-[protein] = N(6)-octanoyl-L-lysyl-[protein] + holo-[ACP] + H(+). It functions in the pathway protein modification; protein lipoylation via endogenous pathway; protein N(6)-(lipoyl)lysine from octanoyl-[acyl-carrier-protein]: step 1/2. Functionally, catalyzes the transfer of endogenously produced octanoic acid from octanoyl-acyl-carrier-protein onto the lipoyl domains of lipoate-dependent enzymes. Lipoyl-ACP can also act as a substrate although octanoyl-ACP is likely to be the physiological substrate. The chain is Octanoyltransferase from Pseudoalteromonas atlantica (strain T6c / ATCC BAA-1087).